The sequence spans 181 residues: Ribulose bisphosphate carboxylase small subunit, chloroplastic 2 (181 aa).

The N-terminal 54 residues, Met1–Ser54, are a transit peptide targeting the chloroplast.

It belongs to the RuBisCO small chain family. As to quaternary structure, heterohexadecamer of 8 large and 8 small subunits.

The protein resides in the plastid. It localises to the chloroplast. Functionally, ruBisCO catalyzes two reactions: the carboxylation of D-ribulose 1,5-bisphosphate, the primary event in carbon dioxide fixation, as well as the oxidative fragmentation of the pentose substrate. Both reactions occur simultaneously and in competition at the same active site. Although the small subunit is not catalytic it is essential for maximal activity. This is Ribulose bisphosphate carboxylase small subunit, chloroplastic 2 from Brassica napus (Rape).